A 129-amino-acid polypeptide reads, in one-letter code: Small ribosomal subunit protein uS11 (129 aa).

It belongs to the universal ribosomal protein uS11 family. Part of the 30S ribosomal subunit.

Located on the platform of the 30S subunit. The protein is Small ribosomal subunit protein uS11 of Methanocaldococcus jannaschii (strain ATCC 43067 / DSM 2661 / JAL-1 / JCM 10045 / NBRC 100440) (Methanococcus jannaschii).